The chain runs to 428 residues: Enolase (428 aa).

Gln-163 is a binding site for (2R)-2-phosphoglycerate. The active-site Proton donor is Glu-205. 3 residues coordinate Mg(2+): Asp-242, Glu-286, and Asp-313. 4 residues coordinate (2R)-2-phosphoglycerate: Lys-338, Arg-367, Ser-368, and Lys-389. Lys-338 acts as the Proton acceptor in catalysis.

It belongs to the enolase family. The cofactor is Mg(2+).

The protein localises to the cytoplasm. The protein resides in the secreted. It localises to the cell surface. The catalysed reaction is (2R)-2-phosphoglycerate = phosphoenolpyruvate + H2O. It participates in carbohydrate degradation; glycolysis; pyruvate from D-glyceraldehyde 3-phosphate: step 4/5. Its function is as follows. Catalyzes the reversible conversion of 2-phosphoglycerate (2-PG) into phosphoenolpyruvate (PEP). It is essential for the degradation of carbohydrates via glycolysis. This chain is Enolase, found in Bordetella bronchiseptica (strain ATCC BAA-588 / NCTC 13252 / RB50) (Alcaligenes bronchisepticus).